We begin with the raw amino-acid sequence, 229 residues long: Putative N-acetylmannosamine-6-phosphate 2-epimerase 2 (229 aa).

Belongs to the NanE family.

The enzyme catalyses an N-acyl-D-glucosamine 6-phosphate = an N-acyl-D-mannosamine 6-phosphate. It functions in the pathway amino-sugar metabolism; N-acetylneuraminate degradation; D-fructose 6-phosphate from N-acetylneuraminate: step 3/5. In terms of biological role, converts N-acetylmannosamine-6-phosphate (ManNAc-6-P) to N-acetylglucosamine-6-phosphate (GlcNAc-6-P). This chain is Putative N-acetylmannosamine-6-phosphate 2-epimerase 2 (nanE2), found in Salmonella typhimurium (strain LT2 / SGSC1412 / ATCC 700720).